A 236-amino-acid polypeptide reads, in one-letter code: Probable methylthioribulose-1-phosphate dehydratase (236 aa).

Residues M1–H29 are disordered. C103 is a binding site for substrate. Positions 121, 123, and 201 each coordinate Zn(2+).

The protein belongs to the aldolase class II family. MtnB subfamily. It depends on Zn(2+) as a cofactor.

The protein resides in the cytoplasm. The catalysed reaction is 5-(methylsulfanyl)-D-ribulose 1-phosphate = 5-methylsulfanyl-2,3-dioxopentyl phosphate + H2O. It functions in the pathway amino-acid biosynthesis; L-methionine biosynthesis via salvage pathway; L-methionine from S-methyl-5-thio-alpha-D-ribose 1-phosphate: step 2/6. In terms of biological role, catalyzes the dehydration of methylthioribulose-1-phosphate (MTRu-1-P) into 2,3-diketo-5-methylthiopentyl-1-phosphate (DK-MTP-1-P). The chain is Probable methylthioribulose-1-phosphate dehydratase from Trichoplax adhaerens (Trichoplax reptans).